Consider the following 764-residue polypeptide: DNA polymerase 3 (764 aa).

The protein belongs to the DNA polymerase type-B family.

The enzyme catalyses DNA(n) + a 2'-deoxyribonucleoside 5'-triphosphate = DNA(n+1) + diphosphate. The polypeptide is DNA polymerase 3 (dpo3) (Saccharolobus solfataricus (strain ATCC 35092 / DSM 1617 / JCM 11322 / P2) (Sulfolobus solfataricus)).